Here is a 18141-residue protein sequence, read N- to C-terminus: Titin (18141 aa).

The segment covering Met1–Ser31 has biased composition (low complexity). Residues Met1 to Ala69 are disordered. The span at Gln32–Val47 shows a compositional bias: basic and acidic residues. The segment covering Gln48–His62 has biased composition (low complexity). 17 Ig-like domains span residues Pro86–Gln177, Pro255–Ala343, Pro372–Asn461, Pro471–Tyr559, Pro618–Ser708, Pro751–Arg842, Pro890–Thr981, Pro1024–Ile1115, Pro1158–Arg1249, Pro1291–Arg1381, Pro1424–Gln1515, Pro1558–Thr1643, Pro1691–Ile1781, Pro1824–Thr1917, Pro1958–Thr2050, Pro2089–Arg2180, and Pro2222–Arg2313. Positions Glu236–Leu266 are disordered. A disulfide bridge links Cys393 with Cys445. 3 disulfide bridges follow: Cys1312–Cys1365, Cys1446–Cys1499, and Cys1579–Cys1632. The cysteines at positions 1846 and 1899 are disulfide-linked. Cys2111 and Cys2164 are oxidised to a cystine. Residues Ser2338–Pro2347 are compositionally biased toward basic and acidic residues. The segment at Ser2338 to Val2357 is disordered. 3 consecutive Ig-like domains span residues Pro2356–Val2449, Pro2488–Lys2581, and Pro2622–Glu2715. The interval Pro2731–Thr2750 is disordered. Residues Gly2734–Ala2746 show a composition bias toward basic and acidic residues. Ig-like domains follow at residues Pro2754–Lys2844, Pro2891–Phe2983, Pro3029–Ser3116, Pro3130–Asn3221, Pro3263–Lys3354, Pro3401–Gln3494, Pro3539–Ser3625, Pro3676–Thr3767, and Pro3811–Ser3901. Residues Cys2775 and Cys2828 are joined by a disulfide bond. Cysteines 3152 and 3205 form a disulfide. Disulfide bonds link Cys3560-Cys3613, Cys3698-Cys3751, and Cys3832-Cys3885. The stretch at Leu3910–Asp3944 is one TPR 1 repeat. 2 consecutive Ig-like domains span residues Pro3954 to Ser4047 and Pro4092 to Val4181. Cys3976 and Cys4029 are disulfide-bonded. Residues Ala4204–Gln4229 adopt a coiled-coil conformation. Disordered stretches follow at residues Leu4226 to Gln4254 and Ser4299 to Ser4336. Residues Tyr4309 to Val4322 are compositionally biased toward polar residues. Ig-like domains follow at residues Pro4394 to Val4482, Pro4497 to Ile4585, Pro4604 to Lys4692, and Pro4703 to Thr4791. Residues Cys4403 to Pro4438 form a TPR 2 repeat. Cys4625 and Cys4676 form a disulfide bridge. Disordered stretches follow at residues Arg4803–Val4891, Asp5318–Pro5368, Arg5413–Ala5648, Ile5667–Lys5701, Lys5718–Gln5748, Lys5775–Leu5982, Lys6034–Asp6350, and Glu6364–Val6393. Residues Pro4822 to Phe4841 show a composition bias toward low complexity. Positions Gly4852 to Ser4863 are enriched in basic residues. Basic and acidic residues-rich tracts occupy residues Gln5344–Leu5357, Arg5436–Gln5447, Gln5541–Lys5552, Ile5591–Glu5621, and Pro5633–Glu5645. A TPR 3 repeat occupies Pro5575–Glu5613. Over residues Glu5681–Glu5697 the composition is skewed to acidic residues. 2 stretches are compositionally biased toward acidic residues: residues Ile5779 to Glu5792 and Asp5818 to Ile5860. Basic residues predominate over residues Arg5865–Lys5874. Over residues Glu5883–Glu5904 the composition is skewed to acidic residues. The span at Arg5910–Lys5920 shows a compositional bias: basic residues. Residues Val5921 to Ser5971 are compositionally biased toward basic and acidic residues. Over residues Lys6034–Thr6043 the composition is skewed to basic residues. Positions Glu6049–Glu6079 are enriched in acidic residues. 6 stretches are compositionally biased toward basic and acidic residues: residues Pro6081 to Thr6092, Arg6099 to Leu6133, Ile6141 to Arg6169, Glu6195 to Glu6209, Lys6217 to Trp6234, and Pro6259 to Lys6268. Over residues Pro6281 to Leu6290 the composition is skewed to acidic residues. A compositionally biased stretch (basic and acidic residues) spans Glu6291–Ala6306. Residues Lys6307–Lys6318 show a composition bias toward basic residues. Acidic residues-rich tracts occupy residues Glu6325–Val6349 and Glu6364–Thr6373. Ig-like domains follow at residues Pro6536–Ile6624, Pro6633–Ser6728, Pro6741–Ser6830, Pro6841–Asn6929, Pro6942–Gln7034, Pro7066–Thr7151, and Pro7189–Ser7279. A disulfide bridge links Cys6557 with Cys6608. Cys6964 and Cys7016 form a disulfide bridge. A coiled-coil region spans residues Lys7621 to Ala7663. 29 disordered regions span residues Ala7773–Gln7793, Glu9414–Gln9440, Glu9485–Ile9510, Glu9556–Gln9582, Glu9627–Ile9652, Glu9698–Gln9724, Glu9769–Glu9796, Thr9838–Ile9865, Glu9911–Gln9937, Glu9982–Gln10008, Glu10053–Glu10080, Glu10125–Ile10149, Glu10195–Ile10220, Glu10266–Ile10291, Glu10337–Glu10364, Glu10408–Ile10433, Glu10479–Ile10504, Glu10550–Gln10576, Glu10621–Glu10648, Glu10692–Ile10717, Glu10763–Ile10788, Glu10834–Gln10860, Glu10905–Glu10932, Glu11047–Gln11073, Glu11118–Ile11143, Glu11189–Glu11216, Glu11260–Gln11286, Glu11679–Asp11703, and Thr11767–Pro11795. A compositionally biased stretch (basic and acidic residues) spans Lys7774–Pro7783. 26 stretches are compositionally biased toward acidic residues: residues Val9429 to Gln9440, Val9500 to Ile9510, Val9571 to Gln9582, Val9642 to Ile9652, Val9713 to Gln9724, Val9784 to Glu9796, Val9855 to Ile9865, Val9926 to Gln9937, Val9997 to Gln10008, Val10068 to Glu10080, Val10139 to Ile10149, Val10210 to Ile10220, Val10281 to Ile10291, Val10352 to Glu10364, Val10423 to Ile10433, Val10494 to Ile10504, Val10565 to Gln10576, Val10636 to Glu10648, Val10707 to Ile10717, Val10778 to Ile10788, Val10849 to Gln10860, Val10920 to Glu10932, Val11062 to Gln11073, Val11133 to Ile11143, Val11204 to Glu11216, and Val11275 to Gln11286. The segment covering Lys11686–Lys11699 has biased composition (basic residues). Over residues Pro11780–Leu11792 the composition is skewed to basic and acidic residues. A TPR 4 repeat occupies Lys11872 to Lys11905. 18 disordered regions span residues Phe12003–Lys12201, Thr12451–Glu12471, Thr12685–Pro12767, Ile12943–Ser12971, Ile13131–Pro13154, Gln13325–Lys13349, Glu13471–Asn13492, Glu13554–Lys13576, Lys13702–Asp13792, Glu13891–Lys13914, Met13951–Lys13994, Thr14073–Lys14094, Glu14109–Thr14322, Glu14354–Lys14377, Pro14414–Val14448, Glu14533–Lys14566, Lys14583–Pro14720, and Val14756–Lys14789. Composition is skewed to basic and acidic residues over residues Glu12022–His12035, Glu12044–Lys12054, Met12124–Ser12134, Leu12183–Lys12201, Thr12457–Glu12471, and Thr12685–Glu12709. Residues His12731 to Ser12741 are compositionally biased toward acidic residues. Residues Lys12750–Lys12760 show a composition bias toward basic residues. Residues Gly13141–Pro13154 show a composition bias toward basic and acidic residues. Positions Lys13482–Asn13492 are enriched in basic residues. A TPR 5 repeat occupies Gln13566–Pro13599. The span at Leu13733–Glu13747 shows a compositional bias: basic and acidic residues. Over residues Pro13771 to Ser13781 the composition is skewed to basic residues. Composition is skewed to basic and acidic residues over residues Val13893–Ala13906 and Glu13975–Glu13984. Residues Thr14221–Val14240 show a composition bias toward basic and acidic residues. The segment covering Lys14264–Ser14274 has biased composition (low complexity). Positions Val14282–Pro14294 are enriched in basic and acidic residues. Residues Ile14542–Ala14554 show a composition bias toward basic and acidic residues. Residues Pro14555–Val14564 show a composition bias toward basic residues. The span at Lys14583–Val14599 shows a compositional bias: basic and acidic residues. A compositionally biased stretch (low complexity) spans Glu14652 to Glu14662. Positions Thr14664 to Ala14683 are enriched in polar residues. A compositionally biased stretch (basic and acidic residues) spans Gln14684–Ile14697. Over residues Val14756–Pro14771 the composition is skewed to acidic residues. One copy of the TPR 6 repeat lies at Ile14904–Lys14936. Disordered regions lie at residues Glu14956–Lys15208, Thr15301–Asp15329, Ile15425–Lys15448, Ile15578–Val15597, Glu15697–Glu15722, Glu15825–Pro15876, Glu15951–Ile15973, and Gln16181–Gln16206. 10 stretches are compositionally biased toward basic and acidic residues: residues Glu14967–Leu14989, Glu15024–Glu15046, Gln15069–Lys15080, Lys15088–Pro15097, Pro15109–Leu15139, Ile15169–Lys15179, Gln15189–Glu15198, Val15316–Gln15325, Ile15425–Glu15437, and Ile15578–Glu15589. A compositionally biased stretch (acidic residues) spans Ile15703–Glu15716. Residues Glu15951–Leu15964 show a composition bias toward basic and acidic residues. Residues Glu16183–Glu16193 show a composition bias toward acidic residues. One can recognise an SH3 domain in the interval Glu16409–Glu16470. Ig-like domains follow at residues Pro16501–Ile16590, Pro16625–Lys16719, Pro16728–Thr16811, Pro16822–Asp16916, Thr16919–Glu17001, Pro17007–Val17091, Pro17097–Thr17180, Pro17184–Cys17270, and Pro17277–Ser17363. Cysteines 16940 and 16989 form a disulfide. The 94-residue stretch at Ala17374–Lys17467 folds into the Fibronectin type-III 1 domain. Ig-like domains are found at residues Pro17473–Lys17558 and Pro17563–Gln17653. Cys17494 and Cys17542 are disulfide-bonded. Fibronectin type-III domains are found at residues Arg17660–Phe17755, Pro17760–Ser17861, Pro17862–Ser17958, and Pro17982–Ala18078. Residues Leu17694–Tyr17728 form a TPR 7 repeat. The disordered stretch occupies residues Ser17741 to Asn17771.

The protein belongs to the protein kinase superfamily. CAMK Ser/Thr protein kinase family. As to quaternary structure, interacts with Msp300; this interaction mediates the recruitment of Msp300 to the Z-disks. Expressed in the mesoderm at stage 11, several hours before myoblast fusion, and persists in most muscle cells, somatic, visceral and pharyngeal muscles and their precursors, until the third instar. Isoform A: Expressed in the indirect flight muscle (at protein level).

The protein localises to the cytoplasm. It is found in the nucleus. It localises to the chromosome. The protein resides in the myofibril. Its subcellular location is the sarcomere. The protein localises to the z line. In terms of biological role, key component in the assembly and functioning of adult and embryonic striated muscles and muscle tendons. By providing connections at the level of individual microfilaments, it contributes to the fine balance of forces between the two halves of the sarcomere. The size and extensibility of the cross-links are the main determinants of sarcomere extensibility properties of muscle. In non-muscle cells, seems to play a role in chromosome condensation and chromosome segregation during mitosis. Might link the lamina network to chromatin or nuclear actin, or both during interphase. This is Titin (sls) from Drosophila melanogaster (Fruit fly).